The primary structure comprises 268 residues: Microtubule-associated protein RP/EB family member 1 (268 aa).

Ala-2 is modified (N-acetylalanine). Residues 14-116 (NLSRHDMLAW…FVQWFKKFFD (103 aa)) form the Calponin-homology (CH) domain. Lys-66 carries the post-translational modification N6-crotonyllysine. Residue Tyr-124 is modified to Phosphotyrosine. The interaction with MTUS2/TIP150 stretch occupies residues 124-268 (YDPVAARQGQ…GGPQEEQEEY (145 aa)). Residues 146–160 (LNKPKKPLSSSSAAP) show a composition bias toward low complexity. The tract at residues 146–191 (LNKPKKPLSSSSAAPQRPISTQRTAAAPKAGPGVVRKNPGVGNGDD) is disordered. Residues Ser-155 and Ser-165 each carry the phosphoserine modification. The EB1 C-terminal domain maps to 185 to 255 (GVGNGDDEAA…LYATDEGFVI (71 aa)). Residues 185–268 (GVGNGDDEAA…GGPQEEQEEY (84 aa)) are interaction with CDK5RAP2. Residues 206–211 (TVEDLE) form an interaction with APC region. Residues 208–268 (EDLEKERDFY…GGPQEEQEEY (61 aa)) are DCTN1-binding. The residue at position 220 (Lys-220) is an N6-acetyllysine. The APC-binding stretch occupies residues 220 to 242 (KLRNIELICQENEGENDPVLQRI). Residues 232–255 (EGENDPVLQRIVDILYATDEGFVI) are interaction with SKA1.

It belongs to the MAPRE family. Homodimer. Heterodimer with MAPRE3. Interacts with DCTN1, DCTN2, TERF1 and dynein intermediate chain. Interaction with DIAPH1 and DIAPH2. Interacts (via C-terminal residues 206-211) with APC (via C-terminal residues 2674-2845); the interaction inhibits association with and bundling of F-actin. Interacts with CLASP2, DST, KIF2C and STIM1; probably required for their targeting to the growing microtubule plus ends. Interacts with MTUS2; interaction is direct and probably targets MTUS2 to microtubules. Interacts (via C-terminus) with SKA1 (via SXIP motif); the interaction is direct and stabilizes the kinetochore-microtubule attachment of the SKA1 complex. Interacts with APC2. Interacts with CLASP1. Interacts with CDK5RAP2. Interacts with MACF1. Interacts with RABL2/RABL2A; binds preferentially to GTP-bound RABL2. Interacts with KCNAB2. Interacts (via C-terminus) with CLIP1. Interacts with SLAIN2 and SLAIN1. Interacts with KIF18B; this interaction is required for efficient accumulation of KIF18B at microtubule plus ends. Interacts with MISP. Interacts with KNSTRN. Interacts with NCKAP5L. Interacts with CAMSAP2. Interacts with PDE4DIP isoform 13/MMG8/SMYLE; this interaction is required for its recruitment to the Golgi apparatus. Forms a pericentrosomal complex with AKAP9, CDK5RAP2 and PDE4DIP isoform 13/MMG8/SMYLE; within this complex, MAPRE1 binding to CDK5RAP2 may be mediated by PDE4DIP. Interacts with AKNA. Interacts with GAS2L1, GAS2L2, and GAS2L3. Interacts with RARRES1 and AGBL2. Acetylation at Lys-220 by KAT2B/PCAF promotes dynamic kinetochore-microtubule interactions in early mitosis. In terms of processing, crotonylated by KAT5 during mitosis, promoting astral microtubule plasticity and dynamic connection between astral microtubules and the cortex during mitotic chromosome segregation, thereby ensuring accurate spindle positioning in mitosis. Decrotonylated by HDAC3.

It localises to the cytoplasm. It is found in the cytoskeleton. The protein localises to the microtubule organizing center. Its subcellular location is the centrosome. The protein resides in the golgi apparatus. It localises to the spindle. It is found in the spindle pole. In terms of biological role, plus-end tracking protein (+TIP) that binds to the plus-end of microtubules and regulates the dynamics of the microtubule cytoskeleton. Recruits other +TIP proteins to microtubules by binding to a conserved Ser-X-Leu-Pro (SXLP) motif in their polypeptide chains. Promotes cytoplasmic microtubule nucleation and elongation. Involved in mitotic spindle positioning by stabilizing microtubules and promoting dynamic connection between astral microtubules and the cortex during mitotic chromosome segregation. Assists chromosome alignment in metaphase by recruiting the SKA complex to the spindle and stabilizing its interactions with microtubule bundles (K-fibers). Also acts as a regulator of minus-end microtubule organization: interacts with the complex formed by AKAP9 and PDE4DIP, leading to recruit CAMSAP2 to the Golgi apparatus, thereby tethering non-centrosomal minus-end microtubules to the Golgi, an important step for polarized cell movement. Promotes elongation of CAMSAP2-decorated microtubule stretches on the minus-end of microtubules. Acts as a regulator of autophagosome transport via interaction with CAMSAP2. Functions downstream of Rho GTPases and DIAPH1 in stable microtubule formation. May play a role in cell migration. The polypeptide is Microtubule-associated protein RP/EB family member 1 (MAPRE1) (Pongo abelii (Sumatran orangutan)).